The chain runs to 497 residues: Glutamate--tRNA ligase (497 aa).

A 'HIGH' region motif is present at residues 13–23 (PSPTGTPHVGM). Residues 257–261 (KLSKR) carry the 'KMSKS' region motif. Residue K260 coordinates ATP.

This sequence belongs to the class-I aminoacyl-tRNA synthetase family. Glutamate--tRNA ligase type 1 subfamily. In terms of assembly, monomer.

It is found in the cytoplasm. It carries out the reaction tRNA(Glu) + L-glutamate + ATP = L-glutamyl-tRNA(Glu) + AMP + diphosphate. Catalyzes the attachment of glutamate to tRNA(Glu) in a two-step reaction: glutamate is first activated by ATP to form Glu-AMP and then transferred to the acceptor end of tRNA(Glu). This chain is Glutamate--tRNA ligase, found in Corynebacterium diphtheriae (strain ATCC 700971 / NCTC 13129 / Biotype gravis).